The primary structure comprises 189 residues: uncharacterized protein (189 aa).

The N-terminal stretch at 1–19 is a signal peptide; the sequence is MKRVLFFLLMIFVSFGVIA.

This is an uncharacterized protein from Escherichia coli (strain K12).